Here is a 247-residue protein sequence, read N- to C-terminus: CDP-diacylglycerol pyrophosphatase (247 aa).

The chain crosses the membrane as a helical span at residues 5-22 (IVLALVVSVAVAGGWLWM).

This sequence belongs to the Cdh family.

It localises to the cell inner membrane. The enzyme catalyses a CDP-1,2-diacyl-sn-glycerol + H2O = a 1,2-diacyl-sn-glycero-3-phosphate + CMP + 2 H(+). It participates in phospholipid metabolism; CDP-diacylglycerol degradation; phosphatidate from CDP-diacylglycerol: step 1/1. The sequence is that of CDP-diacylglycerol pyrophosphatase from Enterobacter sp. (strain 638).